Consider the following 447-residue polypeptide: Probable glycine dehydrogenase (decarboxylating) subunit 1 (447 aa).

It belongs to the GcvP family. N-terminal subunit subfamily. In terms of assembly, the glycine cleavage system is composed of four proteins: P, T, L and H. In this organism, the P 'protein' is a heterodimer of two subunits.

The enzyme catalyses N(6)-[(R)-lipoyl]-L-lysyl-[glycine-cleavage complex H protein] + glycine + H(+) = N(6)-[(R)-S(8)-aminomethyldihydrolipoyl]-L-lysyl-[glycine-cleavage complex H protein] + CO2. Functionally, the glycine cleavage system catalyzes the degradation of glycine. The P protein binds the alpha-amino group of glycine through its pyridoxal phosphate cofactor; CO(2) is released and the remaining methylamine moiety is then transferred to the lipoamide cofactor of the H protein. The polypeptide is Probable glycine dehydrogenase (decarboxylating) subunit 1 (Macrococcus caseolyticus (strain JCSC5402) (Macrococcoides caseolyticum)).